The chain runs to 30 residues: Cycloviolacin-O2 (30 aa).

The segment at residues 1 to 30 (GIPCGESCVWIPCISSAIGCSCKSKVCYRN) is a cross-link (cyclopeptide (Gly-Asn)). 3 cysteine pairs are disulfide-bonded: C4–C20, C8–C22, and C13–C27.

In terms of processing, this is a cyclic peptide.

Functionally, probably participates in a plant defense mechanism. The chain is Cycloviolacin-O2 from Viola biflora (Yellow wood violet).